We begin with the raw amino-acid sequence, 125 residues long: Glycoprotein hormones alpha chain (125 aa).

The N-terminal stretch at 1–30 (MVSAVTTMGCMKAAGVSLLLLYFLLNAADS) is a signal peptide. Intrachain disulfides connect Cys41-Cys64, Cys44-Cys93, Cys61-Cys114, Cys65-Cys116, and Cys92-Cys119. N-linked (GlcNAc...) asparagine glycans are attached at residues Asn85 and Asn110.

This sequence belongs to the glycoprotein hormones subunit alpha family. As to quaternary structure, heterodimer. Glycoprotein hormones are heterodimers composed of a common alpha chain described here and a unique beta chain which confers their biological specificity to the different hormones.

The protein resides in the secreted. Its function is as follows. Shared alpha chain of heterodimeric glycoprotein hormones. These hormones bind specific receptors on target cells that in turn activate downstream signaling pathways. Involved in gametogenesis and steroidogenesis. This is Glycoprotein hormones alpha chain (cga) from Fundulus heteroclitus (Killifish).